A 156-amino-acid polypeptide reads, in one-letter code: Transcription elongation factor GreA (156 aa).

Residues 6–75 (IYLTKEGYEK…ELENMLSKAE (70 aa)) adopt a coiled-coil conformation.

The protein belongs to the GreA/GreB family.

In terms of biological role, necessary for efficient RNA polymerase transcription elongation past template-encoded arresting sites. The arresting sites in DNA have the property of trapping a certain fraction of elongating RNA polymerases that pass through, resulting in locked ternary complexes. Cleavage of the nascent transcript by cleavage factors such as GreA or GreB allows the resumption of elongation from the new 3'terminus. GreA releases sequences of 2 to 3 nucleotides. This chain is Transcription elongation factor GreA, found in Thermosipho africanus (strain TCF52B).